We begin with the raw amino-acid sequence, 171 residues long: MVKKIRLLGDPVLRKKSKNVERVDETTISLIKDLFETMYATDGIGLAAPQIGVSLRIFVMDDGKPRVFINPEIIYKSEEKEIAEEGCLSVPEVFEDVERSKEVTVRYMNEHGEEVEESFVDYSARVVQHEYDHLQGVLFIDLIPSSRRFAIRKKLIEIVRQSQKTDYAERP.

Fe cation is bound by residues Cys87 and His129. The active site involves Glu130. Residue His133 coordinates Fe cation.

It belongs to the polypeptide deformylase family. The cofactor is Fe(2+).

The catalysed reaction is N-terminal N-formyl-L-methionyl-[peptide] + H2O = N-terminal L-methionyl-[peptide] + formate. Removes the formyl group from the N-terminal Met of newly synthesized proteins. Requires at least a dipeptide for an efficient rate of reaction. N-terminal L-methionine is a prerequisite for activity but the enzyme has broad specificity at other positions. In Pseudothermotoga lettingae (strain ATCC BAA-301 / DSM 14385 / NBRC 107922 / TMO) (Thermotoga lettingae), this protein is Peptide deformylase.